Consider the following 244-residue polypeptide: Zinc import ATP-binding protein ZnuC 2 (244 aa).

Residues 3–218 (IGCASLTIQL…PEYLALFGID (216 aa)) enclose the ABC transporter domain. Residue 35 to 42 (GPNGSGKT) participates in ATP binding.

The protein belongs to the ABC transporter superfamily. Zinc importer (TC 3.A.1.15.5) family. In terms of assembly, the complex is composed of two ATP-binding proteins (ZnuC), two transmembrane proteins (ZnuB) and a solute-binding protein (ZnuA).

It is found in the cell inner membrane. The enzyme catalyses Zn(2+)(out) + ATP(in) + H2O(in) = Zn(2+)(in) + ADP(in) + phosphate(in) + H(+)(in). In terms of biological role, part of the ABC transporter complex ZnuABC involved in zinc import. Responsible for energy coupling to the transport system. The protein is Zinc import ATP-binding protein ZnuC 2 of Hahella chejuensis (strain KCTC 2396).